Here is a 285-residue protein sequence, read N- to C-terminus: Glutamate racemase (285 aa).

Substrate is bound by residues 28-29 (DS) and 60-61 (YG). The active-site Proton donor/acceptor is the cysteine 92. 93-94 (NT) provides a ligand contact to substrate. The active-site Proton donor/acceptor is the cysteine 204. Substrate is bound at residue 205 to 206 (TH).

It belongs to the aspartate/glutamate racemases family.

It carries out the reaction L-glutamate = D-glutamate. Its pathway is cell wall biogenesis; peptidoglycan biosynthesis. Its function is as follows. Provides the (R)-glutamate required for cell wall biosynthesis. This Escherichia coli (strain UTI89 / UPEC) protein is Glutamate racemase.